The sequence spans 613 residues: Proline--tRNA ligase (613 aa).

This sequence belongs to the class-II aminoacyl-tRNA synthetase family. ProS type 1 subfamily. In terms of assembly, homodimer.

It localises to the cytoplasm. It catalyses the reaction tRNA(Pro) + L-proline + ATP = L-prolyl-tRNA(Pro) + AMP + diphosphate. Its function is as follows. Catalyzes the attachment of proline to tRNA(Pro) in a two-step reaction: proline is first activated by ATP to form Pro-AMP and then transferred to the acceptor end of tRNA(Pro). As ProRS can inadvertently accommodate and process non-cognate amino acids such as alanine and cysteine, to avoid such errors it has two additional distinct editing activities against alanine. One activity is designated as 'pretransfer' editing and involves the tRNA(Pro)-independent hydrolysis of activated Ala-AMP. The other activity is designated 'posttransfer' editing and involves deacylation of mischarged Ala-tRNA(Pro). The misacylated Cys-tRNA(Pro) is not edited by ProRS. The protein is Proline--tRNA ligase of Tropheryma whipplei (strain Twist) (Whipple's bacillus).